A 78-amino-acid polypeptide reads, in one-letter code: RNA-binding protein Hfq (78 aa).

The region spanning 9–69 is the Sm domain; that stretch reads DHFLNQLRKE…ISTFAPQRNV (61 aa).

Belongs to the Hfq family. As to quaternary structure, homohexamer.

Its function is as follows. RNA chaperone that binds small regulatory RNA (sRNAs) and mRNAs to facilitate mRNA translational regulation in response to envelope stress, environmental stress and changes in metabolite concentrations. Also binds with high specificity to tRNAs. The chain is RNA-binding protein Hfq from Halalkalibacterium halodurans (strain ATCC BAA-125 / DSM 18197 / FERM 7344 / JCM 9153 / C-125) (Bacillus halodurans).